A 433-amino-acid chain; its full sequence is Inositol hexakisphosphate kinase 1 (433 aa).

The segment at 100–160 (ETVEQDDTPE…SPKVELHSHS (61 aa)) is disordered. Positions 113–123 (PRRKHSRRSLH) are enriched in basic residues. Residues 139-149 (SFETSESSQET) are compositionally biased toward polar residues. A compositionally biased stretch (basic and acidic residues) spans 150-160 (KSPKVELHSHS). Ser-151 carries the phosphoserine modification. 220 to 228 (PCVLDLKMG) serves as a coordination point for substrate. Residues 362–383 (PLCGPSTSPSNTSLEAGPSSPP) form a disordered region. A compositionally biased stretch (polar residues) spans 366–375 (PSTSPSNTSL).

It belongs to the inositol phosphokinase (IPK) family.

The protein localises to the cytoplasm. It localises to the nucleus. The catalysed reaction is 1D-myo-inositol hexakisphosphate + ATP = 5-diphospho-1D-myo-inositol 1,2,3,4,6-pentakisphosphate + ADP. It catalyses the reaction 1-diphospho-1D-myo-inositol 2,3,4,5,6-pentakisphosphate + ATP + H(+) = 1,5-bis(diphospho)-1D-myo-inositol 2,3,4,6-tetrakisphosphate + ADP. Functionally, converts inositol hexakisphosphate (InsP6) to diphosphoinositol pentakisphosphate (InsP7/PP-InsP5). Converts 1,3,4,5,6-pentakisphosphate (InsP5) to PP-InsP4. This chain is Inositol hexakisphosphate kinase 1 (Ip6k1), found in Rattus norvegicus (Rat).